A 429-amino-acid chain; its full sequence is Divergent protein kinase domain 2A (429 aa).

A signal peptide spans 1 to 34 (MLRLASLKFGRLFRYAKVLFAASLLVVMLLNTHS).

It belongs to the DIPK family.

It localises to the cytoplasmic vesicle. The protein localises to the COPI-coated vesicle. Its subcellular location is the golgi apparatus. It is found in the secreted. Functionally, may play a role in cardiomyocyte proliferation through paracrine signaling and activation of the PPI3K-AKT-CDK7 signaling cascade. This chain is Divergent protein kinase domain 2A (dipk2a), found in Xenopus tropicalis (Western clawed frog).